Reading from the N-terminus, the 280-residue chain is uncharacterized protein (280 aa).

6 helical membrane passes run 46–66 (LIFL…FVCT), 81–101 (IACS…FLIP), 114–134 (FFYL…SWVV), 137–157 (VWHF…IKLQ), 170–190 (ILFI…LLEL), and 225–245 (IVAC…ALIV). The tract at residues 258 to 280 (ESGSIEKKNKSSPPPRTWQSNYQ) is disordered.

Belongs to the TatC family.

It localises to the mitochondrion membrane. This is an uncharacterized protein from Arabidopsis thaliana (Mouse-ear cress).